The following is a 434-amino-acid chain: ATP-dependent protease ATPase subunit HslU (434 aa).

ATP contacts are provided by residues Val-18, 60–65 (GVGKTE), Asp-247, Glu-312, and Arg-384.

Belongs to the ClpX chaperone family. HslU subfamily. A double ring-shaped homohexamer of HslV is capped on each side by a ring-shaped HslU homohexamer. The assembly of the HslU/HslV complex is dependent on binding of ATP.

Its subcellular location is the cytoplasm. ATPase subunit of a proteasome-like degradation complex; this subunit has chaperone activity. The binding of ATP and its subsequent hydrolysis by HslU are essential for unfolding of protein substrates subsequently hydrolyzed by HslV. HslU recognizes the N-terminal part of its protein substrates and unfolds these before they are guided to HslV for hydrolysis. This Phenylobacterium zucineum (strain HLK1) protein is ATP-dependent protease ATPase subunit HslU.